The chain runs to 213 residues: uncharacterized protein (213 aa).

This is an uncharacterized protein from Acidianus two-tailed virus (ATV).